The chain runs to 1426 residues: Homeobox protein cut-like 2 (1426 aa).

Residues 77 to 104 form a disordered region; it reads PEPPSAREQNEGTCPTGHTPANGNHLPG. At serine 81 the chain carries Phosphoserine. Residues 131 to 311 adopt a coiled-coil conformation; that stretch reads ITLAARLGEA…IKTELSILRA (181 aa). 6 disordered regions span residues 351 to 419, 460 to 488, 599 to 628, 653 to 676, 743 to 769, and 904 to 977; these read ALLA…FPSL, KPPS…GPEE, EIES…STSE, ESGP…TASQ, YASV…PRGD, and LGQG…SSSQ. The segment covering 374-395 has biased composition (pro residues); that stretch reads PPYPPQLPPPPGPEDPLSPSPA. Composition is skewed to low complexity over residues 397–408 and 460–470; these read PLLGPSLGPDGP and KPPSAPAASVP. Residues 482–569 constitute a DNA-binding region (CUT 1); sequence DGAGPEEEQL…VLALRTIQVR (88 aa). Residues 587–655 adopt a coiled-coil conformation; it reads DAIKSILEQA…QQALLEMESG (69 aa). The segment covering 608-628 has biased composition (polar residues); that stretch reads SKNSPASVSIPNGTASSSTSE. 3 stretches are compositionally biased toward low complexity: residues 743–757, 910–928, and 965–976; these read YASV…SSYS, QAPT…EPTS, and SSSLGGKPFSSS. The segment at residues 828 to 915 is a DNA-binding region (CUT 2); that stretch reads QYELYMYREV…QGQGQAPTQQ (88 aa). The segment at residues 983-1070 is a DNA-binding region (CUT 3); it reads QEMVAMSPEL…VEKLRDMKKL (88 aa). The homeobox DNA-binding region spans 1113-1172; that stretch reads AKKPRVVLAPAEKEALRKAYQLEPYPSQQTIELLSFQLNLKTNTVINWFHNYRSRMRREM. The interval 1177 to 1392 is disordered; that stretch reads TQDDPDFDPS…AALHPSTKVN (216 aa). Composition is skewed to basic and acidic residues over residues 1233-1245 and 1260-1274; these read APDR…KQEE and DPDR…EHTH. Residues 1318–1332 show a composition bias toward low complexity; the sequence is LSFKSTSESSCCSLE. The segment covering 1338 to 1350 has biased composition (polar residues); the sequence is PSVISSPDLTTCV. Positions 1351 to 1364 are enriched in low complexity; the sequence is SPAPSSSAPISPSL.

Belongs to the CUT homeobox family. In terms of tissue distribution, restricted to neural tissues. Expressed exclusively in the central and peripheral nervous systems.

It is found in the nucleus. Its function is as follows. Transcription factor involved in the control of neuronal proliferation and differentiation in the brain. Regulates dendrite development and branching, dendritic spine formation, and synaptogenesis in cortical layers II-III. Binds to DNA in a sequence-specific manner. The polypeptide is Homeobox protein cut-like 2 (Cux2) (Mus musculus (Mouse)).